The primary structure comprises 187 residues: UPF0301 protein Shewmr7_1270 (187 aa).

It belongs to the UPF0301 (AlgH) family.

This Shewanella sp. (strain MR-7) protein is UPF0301 protein Shewmr7_1270.